The primary structure comprises 129 residues: Small ribosomal subunit protein uS11 (129 aa).

Belongs to the universal ribosomal protein uS11 family. As to quaternary structure, part of the 30S ribosomal subunit. Interacts with proteins S7 and S18. Binds to IF-3.

Functionally, located on the platform of the 30S subunit, it bridges several disparate RNA helices of the 16S rRNA. Forms part of the Shine-Dalgarno cleft in the 70S ribosome. The sequence is that of Small ribosomal subunit protein uS11 from Rhodopseudomonas palustris (strain BisB18).